The following is a 98-amino-acid chain: Envelope glycoprotein N (98 aa).

Positions 1-24 are cleaved as a signal peptide; it reads MVSSAGLSLTLVAALCALVAPALS. At 25–60 the chain is on the virion surface side; it reads SIVSTEGPLPLLREESRINFWNAACAARGVPVDQPT. A helical transmembrane segment spans residues 61 to 81; that stretch reads AAAVTFYICLLAVLVVALGYA. The Intravirion portion of the chain corresponds to 82–98; sequence TRTCTRMLHASPAGRRV.

Belongs to the herpesviridae glycoprotein N family. In terms of assembly, interacts (via N-terminus) with gM (via N-terminus). The gM-gN heterodimer forms the gCII complex. In terms of processing, O-glycosylated.

It is found in the virion membrane. It localises to the host membrane. The protein resides in the host Golgi apparatus. The protein localises to the host trans-Golgi network. In terms of biological role, envelope glycoprotein necessary for proper maturation of gM and modulation of its membrane fusion activity. Also plays a critical role in virion morphogenesis. The polypeptide is Envelope glycoprotein N (Suid herpesvirus 1 (SuHV-1)).